The sequence spans 79 residues: Translational regulator CsrA (79 aa).

This sequence belongs to the CsrA/RsmA family. As to quaternary structure, homodimer; the beta-strands of each monomer intercalate to form a hydrophobic core, while the alpha-helices form wings that extend away from the core.

Its subcellular location is the cytoplasm. A translational regulator that binds mRNA to regulate translation initiation and/or mRNA stability. Usually binds in the 5'-UTR at or near the Shine-Dalgarno sequence preventing ribosome-binding, thus repressing translation. Its main target seems to be the major flagellin gene, while its function is anatagonized by FliW. The chain is Translational regulator CsrA from Helicobacter hepaticus (strain ATCC 51449 / 3B1).